The sequence spans 986 residues: MSRIESLTRARIDRSRELASKTREKEKMKEAKDARYTNGHLFTTISVSGMTMCYACNKSITAKEALICPTCNVTIHNRCKDTLANCTKVKQKQQKAALLKNNTALQSVSLRSKTTIRERPSSAIYPSDSFRQSLLGSRRGRSSLSLAKSVSTTNIAGHFNDESPLGLRRILSQSTDSLNMRNRTLSVESLIDEAEVIYSELMSDFEMDEKDFAADSWSLAVDSSFLQQHKKEVMKQQDVIYELIQTELHHVRTLKIMTRLFRTGMLEELHLEPGVVQGLFPCVDELSDIHTRFLSQLLERRRQALCPGSTRNFVIHRLGDLLISQFSGPSAEQMCKTYSEFCSRHSKALKLYKELYARDKRFQQFIRKVTRPAVLKRHGVQECILLVTQRITKYPLLISRILQHSHGIEEERQDLTTALGLVKELLSNVDEGIYQLEKGARLQEIYNRMDPRAQTPVPGKGPFGREELLRRKLIHDGCLLWKTATGRFKDVLVLLMTDVLVFLQEKDQKYIFPTLDKPSVVSLQNLIVRDIANQEKGMFLISAAPPEMYEVHTASRDDRSTWIRVIQQSVRTCPSREDFPLIETEDEAYLRRIKMELQQKDRALVELLREKVGLFAEMTHFQAEEDGGSGMALPTLPRGLFRSESLESPRGERLLQDAIREVEGLKDLLVGPGVELLLTPREPALPLEPDSGGNTSPGVTANGEARTFNGSIELCRADSDSSQRDRNGNQLRSPQEEALQRLVNLYGLLHGLQAAVAQQDTLMEARFPEGPERREKLCRANSRDGEAGRAGAAPVAPEKQATELALLQRQHALLQEELRRCRRLGEERATEAGSLEARLRESEQARALLEREAEEARRQLAALGQTEPLPAEAPWARRPVDPRRRSLPAGDALYLSFNPPQPSRGTDRLDLPVTTRSVHRNFEDRERQELGSPEERLQDSSDPDTGSEEEGSSRLSPPHSPRDFTRMQDIPEETESRDGEAVASES.

The Phorbol-ester/DAG-type zinc-finger motif lies at 39–86 (GHLFTTISVSGMTMCYACNKSITAKEALICPTCNVTIHNRCKDTLANC). Residues Ser109, Ser122, Ser129, Ser133, and Ser137 each carry the phosphoserine modification. An interaction with DYNLT1 region spans residues 131–161 (RQSLLGSRRGRSSLSLAKSVSTTNIAGHFND). Ser143 bears the Phosphoserine; by PAK4 mark. Ser151, Ser163, Ser172, Ser174, and Ser177 each carry phosphoserine. Positions 235-432 (KQQDVIYELI…KELLSNVDEG (198 aa)) constitute a DH domain. Lys353 carries the post-translational modification N6-acetyllysine. Residues 472–571 (KLIHDGCLLW…WIRVIQQSVR (100 aa)) enclose the PH domain. Residues 587-611 (EAYLRRIKMELQQKDRALVELLREK) adopt a coiled-coil conformation. Phosphoserine occurs at positions 645 and 648. Thr679 carries the phosphothreonine; by MAPK1 or MAPK3 modification. Residues 683–705 (PALPLEPDSGGNTSPGVTANGEA) form a disordered region. Ser691, Ser696, Ser711, and Ser782 each carry phosphoserine. Residues 798–867 (EKQATELALL…RQLAALGQTE (70 aa)) are a coiled coil. Positions 862-986 (ALGQTEPLPA…RDGEAVASES (125 aa)) are disordered. At Ser886 the chain carries Phosphoserine; by PAK1 and AURKA. Tyr894 carries the phosphotyrosine modification. At Ser896 the chain carries Phosphoserine; by PAK4. Residues 920–939 (RNFEDRERQELGSPEERLQD) are compositionally biased toward basic and acidic residues. Residues Ser932, Ser940, and Ser941 each carry the phosphoserine modification. The segment covering 941-950 (SDPDTGSEEE) has biased composition (acidic residues). Thr945 is modified (phosphothreonine). Phosphoserine is present on residues Ser947, Ser952, Ser953, Ser956, and Ser960.

Found in a complex composed at least of ARHGEF2, NOD2 and RIPK2. Interacts with RIPK2; the interaction mediates tyrosine phosphorylation of RIPK2 by Src kinase CSK. Interacts with RIPK1 and RIPK3. Interacts with YWHAZ/14-3-3 zeta; when phosphorylated at Ser-886. Interacts with the kinases PAK4, AURKA and MAPK1. Interacts with RHOA and RAC1. Interacts with NOD1. Interacts (via the N-terminal zinc finger) with CAPN6 (via domain II). Interacts with DYNLT1. In terms of processing, phosphorylation of Ser-886 by PAK1 induces binding to protein YWHAZ, promoting its relocation to microtubules and the inhibition of its activity. Phosphorylated by AURKA and CDK1 during mitosis, which negatively regulates its activity. Phosphorylation by MAPK1 or MAPK3 increases nucleotide exchange activity. Phosphorylation by PAK4 releases GEF-H1 from the microtubules. Phosphorylated on serine, threonine and tyrosine residues in a RIPK2-dependent manner.

It localises to the cytoplasm. Its subcellular location is the cytoskeleton. The protein localises to the cell junction. The protein resides in the tight junction. It is found in the golgi apparatus. It localises to the spindle. Its subcellular location is the cell projection. The protein localises to the ruffle membrane. The protein resides in the cytoplasmic vesicle. Activates Rho-GTPases by promoting the exchange of GDP for GTP. May be involved in epithelial barrier permeability, cell motility and polarization, dendritic spine morphology, antigen presentation, leukemic cell differentiation, cell cycle regulation, innate immune response, and cancer. Binds Rac-GTPases, but does not seem to promote nucleotide exchange activity toward Rac-GTPases, which was uniquely reported in PubMed:9857026. May stimulate instead the cortical activity of Rac. Inactive toward CDC42, TC10, or Ras-GTPases. Forms an intracellular sensing system along with NOD1 for the detection of microbial effectors during cell invasion by pathogens. Required for RHOA and RIP2 dependent NF-kappaB signaling pathways activation upon S.flexneri cell invasion. Involved not only in sensing peptidoglycan (PGN)-derived muropeptides through NOD1 that is independent of its GEF activity, but also in the activation of NF-kappaB by Shigella effector proteins (IpgB2 and OspB) which requires its GEF activity and the activation of RhoA. Involved in innate immune signaling transduction pathway promoting cytokine IL6/interleukin-6 and TNF-alpha secretion in macrophage upon stimulation by bacterial peptidoglycans; acts as a signaling intermediate between NOD2 receptor and RIPK2 kinase. Contributes to the tyrosine phosphorylation of RIPK2 through Src tyrosine kinase leading to NF-kappaB activation by NOD2. Overexpression activates Rho-, but not Rac-GTPases, and increases paracellular permeability. Involved in neuronal progenitor cell division and differentiation. Involved in the migration of precerebellar neurons. The sequence is that of Rho guanine nucleotide exchange factor 2 (ARHGEF2) from Homo sapiens (Human).